The following is a 196-amino-acid chain: RNA pyrophosphohydrolase (196 aa).

Residues 6–149 enclose the Nudix hydrolase domain; sequence GYRPNVGIVI…KRDVYRKVMK (144 aa). The Nudix box signature appears at 38–59; sequence GGINDNESAEQAMYRELHEEVG. Residues 166 to 196 form a disordered region; it reads SREANSQSNSANKKYSQTKYTKRHFYKSKGQ. The span at 167-184 shows a compositional bias: polar residues; sequence REANSQSNSANKKYSQTK. Residues 185 to 196 are compositionally biased toward basic residues; it reads YTKRHFYKSKGQ.

Belongs to the Nudix hydrolase family. RppH subfamily. The cofactor is a divalent metal cation.

Accelerates the degradation of transcripts by removing pyrophosphate from the 5'-end of triphosphorylated RNA, leading to a more labile monophosphorylated state that can stimulate subsequent ribonuclease cleavage. The protein is RNA pyrophosphohydrolase of Haemophilus influenzae (strain 86-028NP).